Here is a 284-residue protein sequence, read N- to C-terminus: uncharacterized protein (284 aa).

An N-terminal signal peptide occupies residues 1 to 20 (MLHNIQSILQFLLFVSSVQA). The Apple domain occupies 38–121 (CFEFKKNYWI…FTVNFFRNIC (84 aa)). 3 disulfide bridges follow: C38–C121, C63–C89, and C67–C77. N-linked (GlcNAc...) asparagine glycosylation is present at N256. Residues 264–284 (SSTGLKFTTGLLIILVVFLFL) form a helical membrane-spanning segment.

It localises to the membrane. This is an uncharacterized protein from Caenorhabditis elegans.